A 156-amino-acid polypeptide reads, in one-letter code: Small ribosomal subunit protein uS7 (156 aa).

This sequence belongs to the universal ribosomal protein uS7 family. In terms of assembly, part of the 30S ribosomal subunit. Contacts proteins S9 and S11.

One of the primary rRNA binding proteins, it binds directly to 16S rRNA where it nucleates assembly of the head domain of the 30S subunit. Is located at the subunit interface close to the decoding center, probably blocks exit of the E-site tRNA. The polypeptide is Small ribosomal subunit protein uS7 (Polynucleobacter necessarius subsp. necessarius (strain STIR1)).